The primary structure comprises 460 residues: Bifunctional protein GlmU (460 aa).

Residues 1–232 (MALNVVILAA…AIEVEGANNR (232 aa)) form a pyrophosphorylase region. UDP-N-acetyl-alpha-D-glucosamine is bound by residues 8–11 (LAAG), Lys22, Gln73, 78–79 (GT), 100–102 (YGD), Gly137, Glu157, Asn172, and Asn230. Asp102 contacts Mg(2+). Asn230 contacts Mg(2+). The interval 233–253 (VQLAQLERAYQAREAEKLMLA) is linker. The segment at 254-460 (GANLRDPSRI…GWQRPVKIKK (207 aa)) is N-acetyltransferase. Residues Arg336 and Lys354 each coordinate UDP-N-acetyl-alpha-D-glucosamine. His366 functions as the Proton acceptor in the catalytic mechanism. Residues Tyr369 and Asn380 each contribute to the UDP-N-acetyl-alpha-D-glucosamine site. Acetyl-CoA-binding positions include Ala383, 389-390 (NY), Ser408, Ala426, and Arg443.

In the N-terminal section; belongs to the N-acetylglucosamine-1-phosphate uridyltransferase family. The protein in the C-terminal section; belongs to the transferase hexapeptide repeat family. As to quaternary structure, homotrimer. Requires Mg(2+) as cofactor.

Its subcellular location is the cytoplasm. The catalysed reaction is alpha-D-glucosamine 1-phosphate + acetyl-CoA = N-acetyl-alpha-D-glucosamine 1-phosphate + CoA + H(+). The enzyme catalyses N-acetyl-alpha-D-glucosamine 1-phosphate + UTP + H(+) = UDP-N-acetyl-alpha-D-glucosamine + diphosphate. It participates in nucleotide-sugar biosynthesis; UDP-N-acetyl-alpha-D-glucosamine biosynthesis; N-acetyl-alpha-D-glucosamine 1-phosphate from alpha-D-glucosamine 6-phosphate (route II): step 2/2. The protein operates within nucleotide-sugar biosynthesis; UDP-N-acetyl-alpha-D-glucosamine biosynthesis; UDP-N-acetyl-alpha-D-glucosamine from N-acetyl-alpha-D-glucosamine 1-phosphate: step 1/1. Its pathway is bacterial outer membrane biogenesis; LPS lipid A biosynthesis. Catalyzes the last two sequential reactions in the de novo biosynthetic pathway for UDP-N-acetylglucosamine (UDP-GlcNAc). The C-terminal domain catalyzes the transfer of acetyl group from acetyl coenzyme A to glucosamine-1-phosphate (GlcN-1-P) to produce N-acetylglucosamine-1-phosphate (GlcNAc-1-P), which is converted into UDP-GlcNAc by the transfer of uridine 5-monophosphate (from uridine 5-triphosphate), a reaction catalyzed by the N-terminal domain. The sequence is that of Bifunctional protein GlmU from Shewanella baltica (strain OS195).